The sequence spans 415 residues: Gamma-glutamyl phosphate reductase (415 aa).

Belongs to the gamma-glutamyl phosphate reductase family.

The protein localises to the cytoplasm. It carries out the reaction L-glutamate 5-semialdehyde + phosphate + NADP(+) = L-glutamyl 5-phosphate + NADPH + H(+). It participates in amino-acid biosynthesis; L-proline biosynthesis; L-glutamate 5-semialdehyde from L-glutamate: step 2/2. Catalyzes the NADPH-dependent reduction of L-glutamate 5-phosphate into L-glutamate 5-semialdehyde and phosphate. The product spontaneously undergoes cyclization to form 1-pyrroline-5-carboxylate. The sequence is that of Gamma-glutamyl phosphate reductase from Psychromonas ingrahamii (strain DSM 17664 / CCUG 51855 / 37).